The following is a 313-amino-acid chain: MKKQLIIGTRSSPLALWQAEYTKAELSRHFPDLDITLKLVKTTGDVLLDSPLSKIGDMGLFTKDIEKFLIAKEIDLAVHSLKDVPTATPEGLIISAFTEREDTRDVIISKNGVKMLDLPKNAKVATSSLRRMSQLKSLRPDFDIKDIRGNLNTRFQKFDEGEFDAMMLAYAGVYRLNFSDRISEILPHEIMLPAVGQGALGIETRVDDEQTREIVKVMNHSNTEYCCKAERSLLRHLQGGCQIPIGSYASFKNGTLHLLAFVGSVDGTKGIRNEITKTGLTSPAQAEAAGIELAEELLKQGAEEILSEIRKTC.

S-(dipyrrolylmethanemethyl)cysteine is present on cysteine 241.

The protein belongs to the HMBS family. As to quaternary structure, monomer. The cofactor is dipyrromethane.

The catalysed reaction is 4 porphobilinogen + H2O = hydroxymethylbilane + 4 NH4(+). The protein operates within porphyrin-containing compound metabolism; protoporphyrin-IX biosynthesis; coproporphyrinogen-III from 5-aminolevulinate: step 2/4. Its pathway is porphyrin-containing compound metabolism; chlorophyll biosynthesis. In terms of biological role, tetrapolymerization of the monopyrrole PBG into the hydroxymethylbilane pre-uroporphyrinogen in several discrete steps. This is Porphobilinogen deaminase from Chlorobium phaeovibrioides (strain DSM 265 / 1930) (Prosthecochloris vibrioformis (strain DSM 265)).